Here is a 149-residue protein sequence, read N- to C-terminus: Large ribosomal subunit protein bL17 (149 aa).

It belongs to the bacterial ribosomal protein bL17 family. As to quaternary structure, part of the 50S ribosomal subunit. Contacts protein L32.

This chain is Large ribosomal subunit protein bL17, found in Kosmotoga olearia (strain ATCC BAA-1733 / DSM 21960 / TBF 19.5.1).